Consider the following 190-residue polypeptide: Putative phosphatidylethanolamine-binding protein (190 aa).

It belongs to the phosphatidylethanolamine-binding protein family.

The sequence is that of Putative phosphatidylethanolamine-binding protein from Plasmodium falciparum.